The primary structure comprises 480 residues: Citrate synthase 1, peroxisomal (480 aa).

Residues His321, His360, and Asp416 contribute to the active site.

The protein belongs to the citrate synthase family. In terms of tissue distribution, expressed only in siliques. Not expressed in flower, stem, cauline leaf, young leaf, mature leaf and senescent leaf.

Its subcellular location is the peroxisome. The catalysed reaction is oxaloacetate + acetyl-CoA + H2O = citrate + CoA + H(+). Its pathway is carbohydrate metabolism; tricarboxylic acid cycle; isocitrate from oxaloacetate: step 1/2. The sequence is that of Citrate synthase 1, peroxisomal (CSY1) from Arabidopsis thaliana (Mouse-ear cress).